An 847-amino-acid chain; its full sequence is Protein IRS1 (847 aa).

Disordered regions lie at residues 1-82 (MAQR…NFWH), 607-627 (WLME…ATMP), and 715-847 (QVIP…HVHH). A compositionally biased stretch (gly residues) spans 16-25 (RGRGAGGPSG). Low complexity predominate over residues 26-56 (VGSSPPSSCVPMGATSTAGTGASAAPTATPG). Residues 723 to 733 (EPEDDDEDPTY) show a composition bias toward acidic residues. Positions 833–847 (RPKKCQTHAPHHVHH) are enriched in basic residues.

This sequence belongs to the herpesviridae US22 family. As to quaternary structure, interacts (via N-terminus) with the viral DNA polymerase accessory subunit UL44. Interacts (via C-terminus) with host EIF2AK2.

The protein localises to the virion. It is found in the host cytoplasm. Its subcellular location is the host nucleus. Acts as a transactivator along with IE2, and is required for oriLyt-dependent DNA replication in the transient transfection replication assay using native promoters. This is Protein IRS1 (IRS1) from Human cytomegalovirus (strain Merlin) (HHV-5).